We begin with the raw amino-acid sequence, 486 residues long: 2-succinylbenzoate--CoA ligase (486 aa).

The protein belongs to the ATP-dependent AMP-binding enzyme family. MenE subfamily.

The catalysed reaction is 2-succinylbenzoate + ATP + CoA = 2-succinylbenzoyl-CoA + AMP + diphosphate. Its pathway is quinol/quinone metabolism; 1,4-dihydroxy-2-naphthoate biosynthesis; 1,4-dihydroxy-2-naphthoate from chorismate: step 5/7. It functions in the pathway quinol/quinone metabolism; menaquinone biosynthesis. Functionally, converts 2-succinylbenzoate (OSB) to 2-succinylbenzoyl-CoA (OSB-CoA). The protein is 2-succinylbenzoate--CoA ligase of Bacillus pumilus (strain SAFR-032).